The primary structure comprises 398 residues: Methionine import ATP-binding protein MetN 2 (398 aa).

In terms of domain architecture, ABC transporter spans 43 to 282; the sequence is VSLEQVGKVF…PRHGATRALL (240 aa). Residue 79–86 coordinates ATP; that stretch reads GRSGAGKS.

It belongs to the ABC transporter superfamily. Methionine importer (TC 3.A.1.24) family. As to quaternary structure, the complex is composed of two ATP-binding proteins (MetN), two transmembrane proteins (MetI) and a solute-binding protein (MetQ).

It localises to the cell inner membrane. It carries out the reaction L-methionine(out) + ATP + H2O = L-methionine(in) + ADP + phosphate + H(+). It catalyses the reaction D-methionine(out) + ATP + H2O = D-methionine(in) + ADP + phosphate + H(+). In terms of biological role, part of the ABC transporter complex MetNIQ involved in methionine import. Responsible for energy coupling to the transport system. In Burkholderia lata (strain ATCC 17760 / DSM 23089 / LMG 22485 / NCIMB 9086 / R18194 / 383), this protein is Methionine import ATP-binding protein MetN 2.